The chain runs to 838 residues: U1 SNP1-associating protein 1 (838 aa).

The Cytoplasmic segment spans residues 1–536; the sequence is MSEYLAQTPC…VRPLRNSFPL (536 aa). The tract at residues 31 to 240 is required for ERAD-L function; it reads HPLSTVGRLL…DFAPAHNSFF (210 aa). In terms of domain architecture, Ubiquitin-like spans 259–318; that stretch reads ERFVLEFISDATLSITQMNVKPDTTVKQVKDFICSVYTHSLNLRRNDIKLIYKGQLLHEN. Residues 319–418 are important for HRD1 oligomer formation; it reads NFAGNSSKIS…VPTDELYRKC (100 aa). The segment at 345–535 is interaction with HRD1; that stretch reads QEYTESGPGF…VVRPLRNSFP (191 aa). Residues Ser-374, Ser-376, and Ser-379 each carry the phosphoserine modification. The tract at residues 437-490 is required for ERAD-L function and HRD1 oligomer formation; it reads SSYLSVIKGDYGEIKIPISSNDYRINGDNILLSPSAIEQLESALNFKIERPRDS. The helical transmembrane segment at 537–559 threads the bilayer; the sequence is LLVLIRTFYLIGYNSLVPFFIIL. Over 560-563 the chain is Extracellular; that stretch reads EFGS. Residues 564–583 traverse the membrane as a helical segment; the sequence is FLPWKYIILLSLLFIFRTVW. At 584 to 838 the chain is on the cytoplasmic side; it reads NTQEVWNLWR…QPHLYIPDED (255 aa). The tract at residues 584-838 is interaction with DER1; the sequence is NTQEVWNLWR…QPHLYIPDED (255 aa). Residues 795–838 form a disordered region; the sequence is ARDREQPAPSAQQQENEDEALIIPDEEEPTATGAQPHLYIPDED. Over residues 809 to 823 the composition is skewed to acidic residues; the sequence is ENEDEALIIPDEEEP.

As to quaternary structure, component of the HRD1 ubiquitin ligase complex which contains the E3 ligase HRD1, its cofactors HRD3, USA1 and DER1, substrate recruiting factor YOS9 and CDC48-binding protein UBX2. Within the complex, interacts directly with HRD1 (via N-terminus) and DER1 (via C-terminus) and indirectly with HRD3. In ERAD-L, HRD3 and YOS9 jointly bind misfolded glycoproteins in the endoplasmic reticulum (ER) lumen. Movement of ERAD-L substrates through the ER membrane is facilitated by HRD1 and DER1 which have lateral gates facing each other and which distort the membrane region between the lateral gates, making it much thinner than a normal phospholipid bilayer. Substrates insert into the membrane as a hairpin loop with one strand interacting with DER1 and the other with HRD1. The HRD1 complex interacts with the heterotrimeric CDC48-NPL4-UFD1 ATPase complex which is recruited by UBX2 via its interaction with CDC48 and which moves ubiquitinated substrates to the cytosol for targeting to the proteasome.

The protein resides in the endoplasmic reticulum membrane. In terms of biological role, scaffold protein of the endoplasmic reticulum-associated degradation (ERAD) (also known as endoplasmic reticulum quality control, ERQC) pathway involved in ubiquitin-dependent degradation of misfolded endoplasmic reticulum proteins. Component of the HRD1 ubiquitin ligase complex, which is part of the ERAD-L and ERAD-M pathways responsible for the rapid degradation of soluble lumenal and membrane proteins with misfolded lumenal domains (ERAD-L), or ER-membrane proteins with misfolded transmembrane domains (ERAD-M). Has multiple functions in ERAD including recruitment of DER1 to the HRD1 ubiquitin ligase, and regulation of HRD1 activity. Involved in oligomerization of HRD1 and in HRD1 autoubiquitination and degradation. The protein is U1 SNP1-associating protein 1 (USA1) of Saccharomyces cerevisiae (strain ATCC 204508 / S288c) (Baker's yeast).